The chain runs to 335 residues: (+)-caryolan-1-ol synthase (335 aa).

Mg(2+) is bound by residues aspartate 83, aspartate 87, asparagine 220, serine 224, and glutamate 228. The DDXXD motif motif lies at 83 to 87 (DDEFD). Positions 220–228 (NDICSFEKE) match the NSE/DTE motif motif.

Belongs to the terpene synthase family. Mg(2+) serves as cofactor. It depends on Mn(2+) as a cofactor.

It catalyses the reaction (2E,6E)-farnesyl diphosphate = (+)-(E)-beta-caryophyllene + diphosphate. The catalysed reaction is (+)-(E)-beta-caryophyllene + H2O = (+)-caryolan-1-ol. It functions in the pathway secondary metabolite biosynthesis; terpenoid biosynthesis. Sesquiterpene cyclase that first catalyzes the cyclization of farnesyl diphosphate (FPP) to the bicyclic sesquiterpene (+)-beta-caryophyllene intermediate, and then its conversion to (+)-caryolan-1-ol via a second cyclization and the addition of a water molecule. The chain is (+)-caryolan-1-ol synthase (gcoA) from Streptomyces griseus subsp. griseus (strain JCM 4626 / CBS 651.72 / NBRC 13350 / KCC S-0626 / ISP 5235).